The primary structure comprises 990 residues: Kinesin-related protein 5 (990 aa).

Residues N6 to I330 form the Kinesin motor domain. ATP is bound at residue G83–T90. 2 disordered regions span residues Q401–D485 and F732–Q788. Over residues S406–S418 the composition is skewed to gly residues. Low complexity-rich tracts occupy residues T466–D485 and S733–N781. The stretch at I513–I948 forms a coiled coil.

Belongs to the TRAFAC class myosin-kinesin ATPase superfamily. Kinesin family. Kinesin subfamily. Interacts with actin.

The protein localises to the cytoplasm. Its subcellular location is the cytoskeleton. Microtubule-associated force-producing protein that plays a role in organelle transport. Its motor activity is directed toward the microtubule's plus end. May connect microtubules to actin filaments. Associates with actin-based structures in cells and is likely involved in the organization of actin cytoskeletons in such structures. The chain is Kinesin-related protein 5 (kif5) from Dictyostelium discoideum (Social amoeba).